Consider the following 498-residue polypeptide: Early growth response protein 1 (498 aa).

Disordered regions lie at residues 137–203 and 287–308; these read NASP…TASI and PSRM…RPYA. A compositionally biased stretch (low complexity) spans 139 to 163; the sequence is SPSSAPSSSPSSSSSSSQSPPLSCS. A compositionally biased stretch (polar residues) spans 179-202; the sequence is FPNSSPELFPDQSPQPFQNASTAS. C2H2-type zinc fingers lie at residues 307 to 331, 337 to 359, and 365 to 387; these read YACP…IRIH, FQCR…IRTH, and FACD…TKIH. Residues 378–422 are disordered; the sequence is DERKRHTKIHLRQKDKKADKATPVSVASPVSSYSPSASTSYPSPV. A compositionally biased stretch (basic residues) spans 382-392; sequence RHTKIHLRQKD. The span at 398-422 shows a compositional bias: low complexity; the sequence is ATPVSVASPVSSYSPSASTSYPSPV.

The protein belongs to the EGR C2H2-type zinc-finger protein family.

The protein localises to the nucleus. Its subcellular location is the cytoplasm. Its function is as follows. Transcriptional regulator. Recognizes and binds to the DNA sequence 5'-GCG(T/G)GGGCG-3'(EGR-site) in the promoter region of target genes. Binds double-stranded target DNA, irrespective of the cytosine methylation status. Regulates the transcription of numerous target genes, and thereby plays an important role in regulating the response to growth factors, DNA damage, and ischemia. Plays a role in the regulation of cell survival, proliferation and cell death. Mediates responses to ischemia and hypoxia; regulates the expression of proteins that are involved in inflammatory processes. Plays a role in regulating the expression of circadian clock genes. In Xenopus tropicalis (Western clawed frog), this protein is Early growth response protein 1.